The following is a 168-amino-acid chain: Cilia- and flagella-associated protein HOATZ (168 aa).

Residues 142–168 (PKDKVPKSKEVLSESGLRDQEEVKALE) form a disordered region.

The protein belongs to the HOATZ family. Specifically expressed in tissues with motile cilia and flagella, such as brain ependyma, lung, testis, and oviduct but not in whole brain, liver,kidney, spleen, and eyeball.

It is found in the cytoplasm. The protein resides in the cell projection. The protein localises to the cilium. Required for motile ciliogenesis and flagellar genesis by mediating the maturation of the glycolytic enzyme ENO4. The protein is Cilia- and flagella-associated protein HOATZ of Mus musculus (Mouse).